We begin with the raw amino-acid sequence, 312 residues long: Isochorismatase (312 aa).

Residues 229–302 (VFTCENIRKQ…EWQKLLTTRS (74 aa)) enclose the Carrier domain. S263 bears the O-(pantetheine 4'-phosphoryl)serine mark.

It belongs to the isochorismatase family.

The catalysed reaction is isochorismate + H2O = (2S,3S)-2,3-dihydroxy-2,3-dihydrobenzoate + pyruvate. It participates in siderophore biosynthesis; bacillibactin biosynthesis. In Bacillus subtilis (strain 168), this protein is Isochorismatase (dhbB).